The following is a 464-amino-acid chain: MEFISSRDMQILDTNCEYFGLSRMLLMENAGKGVAEEVMKRFYEGKVQIFAGSGNNGGDGFVAARHLKGFDVEIFLLSKPKTELAIKNLEICRKAGFPVKEGLPEEIDADIVIDAMLGTGVRGRLREPYSTAVKMINESDAFKVAVDVPTGLDPDSGSYEEAVKADLTVTFHKAKPGLAKAREVCGEVAVKDIGIPESFENLCGPGDVAFSYKRYEDAHKGVHGKVLVVGGGDYTGAPALASLAALYAGADIVTTAVPMAIRKVVASFSPNLIVRGVGEERIEMKNLEELEELVKRHDVVVAGMGVGENPEFKEVVEELLKSCKKAVLDAQGIVDSVPENCECILTPHRGEFGRVFGDTEVQKAALKAKAVILLKGREDVITDGSRVKVNRSGNAGMTVGGTGDVLAGIAAAFLCNDDAFHSACAAAFLNGLAGDVCFEKFGYNYTATDLVKAIPEAILRCKSF.

The segment at 1-205 (MEFISSRDMQ…PESFENLCGP (205 aa)) is NAD(P)H-hydrate epimerase. Residues 9 to 201 (MQILDTNCEY…DIGIPESFEN (193 aa)) form the YjeF N-terminal domain. The NADPHX 1; for epimerase activity stretch occupies residues 55–59 (NNGGD). Residues Asn56 and Asp114 each contribute to the K(+) site. The segment at 118 to 124 (GTGVRGR) is NADPHX 1; for epimerase activity. The (6S)-NADPHX site is built by Tyr129 and Asp147. Thr150 is a K(+) binding site. Residues 203–461 (CGPGDVAFSY…KAIPEAILRC (259 aa)) enclose the YjeF C-terminal domain. Residues 205-464 (PGDVAFSYKR…PEAILRCKSF (260 aa)) are ADP-dependent (S)-NAD(P)H-hydrate dehydratase. A (6S)-NADPHX-binding site is contributed by Gly305. The segment at 348-354 (HRGEFGR) is NADPHX 2; for dehydratase activity. ADP is bound by residues 375 to 379 (KGRED) and 394 to 403 (NAGMTVGGTG). Residue Asp404 coordinates (6S)-NADPHX.

In the N-terminal section; belongs to the NnrE/AIBP family. The protein in the C-terminal section; belongs to the NnrD/CARKD family. K(+) serves as cofactor.

It carries out the reaction (6S)-NADHX + ADP = AMP + phosphate + NADH + H(+). The enzyme catalyses (6S)-NADPHX + ADP = AMP + phosphate + NADPH + H(+). It catalyses the reaction (6R)-NADHX = (6S)-NADHX. The catalysed reaction is (6R)-NADPHX = (6S)-NADPHX. Its function is as follows. Bifunctional enzyme that catalyzes the epimerization of the S- and R-forms of NAD(P)HX and the dehydration of the S-form of NAD(P)HX at the expense of ADP, which is converted to AMP. This allows the repair of both epimers of NAD(P)HX, a damaged form of NAD(P)H that is a result of enzymatic or heat-dependent hydration. This Archaeoglobus fulgidus (strain ATCC 49558 / DSM 4304 / JCM 9628 / NBRC 100126 / VC-16) protein is Bifunctional NAD(P)H-hydrate repair enzyme Nnr (nnr).